The primary structure comprises 1143 residues: Condensin-2 complex subunit G2 (1143 aa).

Ser-30 is modified (phosphoserine). Residues 460-498 form an HEAT repeat; the sequence is LLPALRYSLHDNSEKVRVAFVDMLLKIKAVRAAKFWKIC. 2 positions are modified to phosphothreonine: Thr-805 and Thr-1119.

In terms of assembly, component of the condensin-2 complex, which contains the SMC2 and SMC4 heterodimer, and 3 non SMC subunits that probably regulate the complex: NCAPH2, NCAPD3 and NCAPG2.

Its subcellular location is the nucleus. Its function is as follows. Regulatory subunit of the condensin-2 complex, a complex which establishes mitotic chromosome architecture and is involved in physical rigidity of the chromatid axis. In Homo sapiens (Human), this protein is Condensin-2 complex subunit G2 (NCAPG2).